A 663-amino-acid polypeptide reads, in one-letter code: Polyunsaturated fatty acid lipoxygenase ALOX12 (663 aa).

In terms of domain architecture, PLAT spans 2–114; that stretch reads GRYRIRVATG…ILSLPEGTAR (113 aa). In terms of domain architecture, Lipoxygenase spans 115-663; that stretch reads LPGDNALDMF…PSCIENSVTI (549 aa). At Ser-246 the chain carries Phosphoserine. Fe cation is bound by residues His-360, His-365, His-540, Asn-544, and Ile-663.

The protein belongs to the lipoxygenase family. Fe cation is required as a cofactor. As to expression, expressed in vascular smooth muscle cells.

It is found in the cytoplasm. It localises to the cytosol. The protein localises to the membrane. The enzyme catalyses (5Z,8Z,11Z,14Z)-eicosatetraenoate + O2 = (12S)-hydroperoxy-(5Z,8Z,10E,14Z)-eicosatetraenoate. The catalysed reaction is (5Z,8Z,11Z,14Z)-eicosatetraenoate + O2 = (15S)-hydroperoxy-(5Z,8Z,11Z,13E)-eicosatetraenoate. It catalyses the reaction 2 leukotriene A4 + O2 + 2 H2O = 2 lipoxin A4. It carries out the reaction 2 leukotriene A4 + O2 + 2 H2O = 2 lipoxin B4. The enzyme catalyses (14S)-hydroperoxy-(4Z,7Z,10Z,12E,16Z,19Z)-docosahexaenoate = (13S,14S)-epoxy-(4Z,7Z,9E,11E,16Z,19Z)-docosahexaenoate + H2O. The catalysed reaction is N-(5Z,8Z,11Z,14Z)-eicosatetraenoyl-L-alanine + O2 = N-(15S)-hydroperoxy-(5Z,8Z,11Z,13E)-eicosatetraenoyl-alanine. It catalyses the reaction N-(5Z,8Z,11Z,14Z)-eicosatetraenoyl-L-alanine + O2 = N-(12S)-hydroperoxy-(5Z,8Z,10E,14Z)-eicosatetraenoyl-alanine. It carries out the reaction N-(5Z,8Z,11Z,14Z)-eicosatetraenoyl-gamma-aminobutanoate + O2 = N-(15S)-hydroperoxy-(5Z,8Z,11Z,13E)-eicosatetraenoyl-gamma-aminobutanoate. The enzyme catalyses N-(5Z,8Z,11Z,14Z)-eicosatetraenoyl-gamma-aminobutanoate + O2 = N-(12S)-hydroperoxy-(5Z,8Z,10E,14Z)-eicosatetraenoyl-gamma-aminobutanoate. The catalysed reaction is N-(5Z,8Z,11Z,14Z)-eicosatetraenoyl-glycine + O2 = N-(15S)-hydroperoxy-(5Z,8Z,11Z,13E)-eicosatetraenoyl-glycine. It catalyses the reaction N-(5Z,8Z,11Z,14Z)-eicosatetraenoyl-glycine + O2 = N-(12S)-hydroperoxy-(5Z,8Z,10E,14Z)-eicosatetraenoyl-glycine. It carries out the reaction N-(5Z,8Z,11Z,14Z)-eicosatetraenoyl-taurine + O2 = N-(12S)-hydroperoxy-(5Z,8Z,10E,14Z)-eicosatetraenoyl-taurine. The enzyme catalyses N-(5Z,8Z,11Z,14Z)-eicosatetraenoyl-taurine + O2 = N-(15S)-hydroperoxy-(5Z,8Z,11Z,13E)-eicosatetraenoyl-taurine. The catalysed reaction is (4Z,7Z,10Z,13Z,16Z,19Z)-docosahexaenoate + O2 = (14S)-hydroperoxy-(4Z,7Z,10Z,12E,16Z,19Z)-docosahexaenoate. It catalyses the reaction (7S)-hydroperoxy-(4Z,8E,10Z,13Z,16Z,19Z)-docosahexaenoate + O2 = (7S,14S)-dihydroperoxy-(4Z,8E,10Z,12E,16Z,19Z)-docosahexaenoate. It carries out the reaction (7S)-hydroperoxy-(4Z,8E,10Z,13Z,16Z,19Z)-docosahexaenoate + O2 = (7S,17S)-dihydroperoxy-(4Z,8E,10Z,13Z,15E,19Z)-docosahexaenoate. The enzyme catalyses (5Z,8Z,11Z,14Z,17Z)-eicosapentaenoate + O2 = (12S)-hydroperoxy-(5Z,8Z,10E,14Z,17Z)-eicosapentaenoate. The catalysed reaction is (8Z,11Z,14Z)-eicosatrienoate + O2 = (12S)-hydroperoxy-(8Z,10E,14Z)-eicosatrienoate. It catalyses the reaction (9Z,12Z)-octadecadienoate + O2 = (13S)-hydroperoxy-(9Z,11E)-octadecadienoate. It carries out the reaction (5Z,8Z,11Z)-eicosatrienoate + O2 = (12S)-hydroperoxy-(5Z,8Z,10E)-eicosatrienoate. The enzyme catalyses (14R,15S)-epoxy-(5Z,8Z,11Z)-eicosatrienoate + O2 = (12S)-hydroperoxy-(14R,15S)-epoxy-(5Z,8Z,10E)-eicosatrienoate. The catalysed reaction is (14S,15R)-epoxy-(5Z,8Z,11Z)-eicosatrienoate + O2 = (12S)-hydroperoxy-(14S,15R)-epoxy-(5Z,8Z,10E)-eicosatrienoate. It functions in the pathway lipid metabolism; hydroperoxy eicosatetraenoic acid biosynthesis. With respect to regulation, activated by EGF. Arachidonic acid conversion is inhibited by (13S,14S)-epoxy-(4Z,7Z,9E,11E,16Z,19Z)-docosahexaenoate (13S,14S-epoxy-DHA). Arachidonate 12-lipoxygenase activity is decreased when PH decreases from 7.4 to 6. Catalyzes the regio and stereo-specific incorporation of molecular oxygen into free and esterified polyunsaturated fatty acids generating lipid hydroperoxides that can be further reduced to the corresponding hydroxy species. Mainly converts arachidonate ((5Z,8Z,11Z,14Z)-eicosatetraenoate) to the specific bioactive lipid (12S)-hydroperoxyeicosatetraenoate/(12S)-HPETE. Through the production of bioactive lipids like (12S)-HPETE it regulates different biological processes including platelet activation. It can also catalyze the epoxidation of double bonds of polyunsaturated fatty acids such as (14S)-hydroperoxy-docosahexaenoate/(14S)-HPDHA resulting in the formation of (13S,14S)-epoxy-DHA. Furthermore, it may participate in the sequential oxidations of DHA ((4Z,7Z,10Z,13Z,16Z,19Z)-docosahexaenoate) to generate specialized pro-resolving mediators (SPMs) like resolvin D5 ((7S,17S)-diHPDHA) and (7S,14S)-diHPDHA, that actively down-regulate the immune response and have anti-aggregation properties with platelets. An additional function involves a multistep process by which it transforms leukotriene A4/LTA4 into the bioactive lipids lipoxin A4/LXA4 and lipoxin B4/LXB4, both are vasoactive and LXA4 may regulate neutrophil function via occupancy of specific recognition sites. Can also peroxidize linoleate ((9Z,12Z)-octadecadienoate) to (13S)-hydroperoxyoctadecadienoate/ (13S-HPODE). Due to its role in regulating both the expression of the vascular endothelial growth factor (VEGF, an angiogenic factor involved in the survival and metastasis of solid tumors) and the expression of integrin beta-1 (known to affect tumor cell migration and proliferation), it can be regarded as protumorigenic. Important for cell survival, as it may play a role not only in proliferation but also in the prevention of apoptosis in vascular smooth muscle cells. This chain is Polyunsaturated fatty acid lipoxygenase ALOX12, found in Homo sapiens (Human).